The primary structure comprises 67 residues: Light-harvesting protein B-870 alpha chain (67 aa).

Residues M1–R12 are Cytoplasmic-facing. Residues A13–L33 traverse the membrane as a helical segment. Residue H29 coordinates a bacteriochlorophyll. At G34–K67 the chain is on the periplasmic side.

The protein belongs to the antenna complex alpha subunit family. As to quaternary structure, an alpha/beta heterodimer. The core complex is formed by different alpha and beta chains, binding bacteriochlorophyll molecules, and arranged most probably in tetrameric structures disposed around the reaction center. The non-pigmented gamma chains may constitute additional components.

It localises to the cell inner membrane. Functionally, antenna complexes are light-harvesting systems, which transfer the excitation energy to the reaction centers. This Rubrivivax gelatinosus (strain NBRC 100245 / IL144) protein is Light-harvesting protein B-870 alpha chain (pufA).